Reading from the N-terminus, the 148-residue chain is UPF0178 protein Pcar_2632 (148 aa).

Belongs to the UPF0178 family.

This Syntrophotalea carbinolica (strain DSM 2380 / NBRC 103641 / GraBd1) (Pelobacter carbinolicus) protein is UPF0178 protein Pcar_2632.